The primary structure comprises 124 residues: Large ribosomal subunit protein bL12 (124 aa).

It belongs to the bacterial ribosomal protein bL12 family. Homodimer. Part of the ribosomal stalk of the 50S ribosomal subunit. Forms a multimeric L10(L12)X complex, where L10 forms an elongated spine to which 2 to 4 L12 dimers bind in a sequential fashion. Binds GTP-bound translation factors.

Its function is as follows. Forms part of the ribosomal stalk which helps the ribosome interact with GTP-bound translation factors. Is thus essential for accurate translation. The polypeptide is Large ribosomal subunit protein bL12 (Sulfurovum sp. (strain NBC37-1)).